Consider the following 293-residue polypeptide: MAAITASMVAELRAKTDAPMMECKKALTEADGDMAKAEELLRVKLGNKASKAASRVTAEGVVASFVGANAGALVELNCETDFVAKNDDFNAFAKTVAELVATQNPADVAALSALPLDGKTVDEVRLALVGKIGENISIRRFVRFETSNKLATYLHGSRIGVIVEYTGEQEQVGKDVAMHVAAMKPVSLSSDDVPAELIEKERRVAEQKAAESGKPAEIVAKMVDGSVQKFLKEVSLLNQPFVKNDKQTIEQMLKASNAAVQKFALFVVGEGIEKRQDDFAAEVAAQVAAAKQQ.

Residues 80–83 form an involved in Mg(2+) ion dislocation from EF-Tu region; it reads TDFV.

Belongs to the EF-Ts family.

The protein resides in the cytoplasm. Functionally, associates with the EF-Tu.GDP complex and induces the exchange of GDP to GTP. It remains bound to the aminoacyl-tRNA.EF-Tu.GTP complex up to the GTP hydrolysis stage on the ribosome. This is Elongation factor Ts from Burkholderia thailandensis (strain ATCC 700388 / DSM 13276 / CCUG 48851 / CIP 106301 / E264).